Reading from the N-terminus, the 92-residue chain is Small ribosomal subunit protein uS19c (92 aa).

The protein belongs to the universal ribosomal protein uS19 family.

The protein localises to the plastid. It localises to the chloroplast. Its function is as follows. Protein S19 forms a complex with S13 that binds strongly to the 16S ribosomal RNA. This chain is Small ribosomal subunit protein uS19c, found in Ostreococcus tauri.